The sequence spans 482 residues: tRNA sulfurtransferase (482 aa).

Residues 61-165 enclose the THUMP domain; that stretch reads EAIRDALTRI…QDRLLLIKSR (105 aa). ATP contacts are provided by residues 183-184, Lys-265, Gly-287, and Gln-296; that span reads LI. Residues Cys-344 and Cys-456 are joined by a disulfide bond. Positions 404–482 constitute a Rhodanese domain; sequence FVPTDVLLDI…GFSNVKVYRP (79 aa). The active-site Cysteine persulfide intermediate is Cys-456.

This sequence belongs to the ThiI family.

Its subcellular location is the cytoplasm. It carries out the reaction [ThiI sulfur-carrier protein]-S-sulfanyl-L-cysteine + a uridine in tRNA + 2 reduced [2Fe-2S]-[ferredoxin] + ATP + H(+) = [ThiI sulfur-carrier protein]-L-cysteine + a 4-thiouridine in tRNA + 2 oxidized [2Fe-2S]-[ferredoxin] + AMP + diphosphate. The enzyme catalyses [ThiS sulfur-carrier protein]-C-terminal Gly-Gly-AMP + S-sulfanyl-L-cysteinyl-[cysteine desulfurase] + AH2 = [ThiS sulfur-carrier protein]-C-terminal-Gly-aminoethanethioate + L-cysteinyl-[cysteine desulfurase] + A + AMP + 2 H(+). Its pathway is cofactor biosynthesis; thiamine diphosphate biosynthesis. Catalyzes the ATP-dependent transfer of a sulfur to tRNA to produce 4-thiouridine in position 8 of tRNAs, which functions as a near-UV photosensor. Also catalyzes the transfer of sulfur to the sulfur carrier protein ThiS, forming ThiS-thiocarboxylate. This is a step in the synthesis of thiazole, in the thiamine biosynthesis pathway. The sulfur is donated as persulfide by IscS. In Pectobacterium atrosepticum (strain SCRI 1043 / ATCC BAA-672) (Erwinia carotovora subsp. atroseptica), this protein is tRNA sulfurtransferase.